Reading from the N-terminus, the 363-residue chain is Protein-glutamate methylesterase/protein-glutamine glutaminase of group 3 operon (363 aa).

Residues 7–124 form the Response regulatory domain; it reads RVLIVDDSAS…RQALLECSTR (118 aa). Position 58 is a 4-aspartylphosphate (Asp58). Residues 166–357 form the CheB-type methylesterase domain; it reads PTTERIVCIG…REIMLWYQAG (192 aa). Residues Ser177, His203, and Asp299 contribute to the active site.

This sequence belongs to the CheB family. Post-translationally, phosphorylated by CheA. Phosphorylation of the N-terminal regulatory domain activates the methylesterase activity.

The protein resides in the cytoplasm. It carries out the reaction [protein]-L-glutamate 5-O-methyl ester + H2O = L-glutamyl-[protein] + methanol + H(+). It catalyses the reaction L-glutaminyl-[protein] + H2O = L-glutamyl-[protein] + NH4(+). In terms of biological role, involved in chemotaxis. Part of a chemotaxis signal transduction system that modulates chemotaxis in response to various stimuli. Catalyzes the demethylation of specific methylglutamate residues introduced into the chemoreceptors (methyl-accepting chemotaxis proteins or MCP) by CheR. Also mediates the irreversible deamidation of specific glutamine residues to glutamic acid. The polypeptide is Protein-glutamate methylesterase/protein-glutamine glutaminase of group 3 operon (Bradyrhizobium diazoefficiens (strain JCM 10833 / BCRC 13528 / IAM 13628 / NBRC 14792 / USDA 110)).